Here is a 320-residue protein sequence, read N- to C-terminus: Mitochondrial thiamine pyrophosphate carrier (320 aa).

3 Solcar repeats span residues 13–106 (NTKF…LTEL), 116–202 (REFS…LKHL), and 214–309 (NENL…FCNV). The helical transmembrane segment at 19–39 (AVAGSVSGLVTRALISPFDVI) threads the bilayer. A Phosphoserine modification is found at Ser51. 4 helical membrane passes run 87 to 107 (ILSIGYGAVQFLSFEMLTELV), 122 to 142 (FVCGGLAACMATLTVHPVDVL), 173 to 193 (VFYKGLAPTLIAIFPYAGLQF), and 220 to 240 (LLCGSGAGVISKTLTYPLDLF). The Substrate recognition signature appears at 241 to 246 (KKRLQV). The helical transmembrane segment at 293–313 (ALSTGFMFFWYEFFCNVFHCM) threads the bilayer.

It belongs to the mitochondrial carrier (TC 2.A.29) family.

Its subcellular location is the mitochondrion membrane. The catalysed reaction is thiamine phosphate(out) + thiamine diphosphate(in) = thiamine phosphate(in) + thiamine diphosphate(out). Mitochondrial transporter mediating uptake of thiamine diphosphate into mitochondria. It is not clear if the antiporter activity is affected by the membrane potential or by the proton electrochemical gradient. This Pongo abelii (Sumatran orangutan) protein is Mitochondrial thiamine pyrophosphate carrier (SLC25A19).